A 464-amino-acid polypeptide reads, in one-letter code: Serine carboxypeptidase-like 22 (464 aa).

A signal peptide spans 1–22 (MARTHLLFLLFVLLSLATSSTS). Residues Asn-52, Asn-113, and Asn-137 are each glycosylated (N-linked (GlcNAc...) asparagine). Disulfide bonds link Cys-86-Cys-346, Cys-247-Cys-258, and Cys-282-Cys-314. Ser-179 is an active-site residue. 2 N-linked (GlcNAc...) asparagine glycosylation sites follow: Asn-290 and Asn-335. Catalysis depends on residues Asp-385 and His-437.

Belongs to the peptidase S10 family. Expression not detected.

Its subcellular location is the secreted. Probable carboxypeptidase. The sequence is that of Serine carboxypeptidase-like 22 (SCPL22) from Arabidopsis thaliana (Mouse-ear cress).